Here is a 238-residue protein sequence, read N- to C-terminus: Ribitol-5-phosphate cytidylyltransferase (238 aa).

Residues Leu-7–Gly-10 and Gly-81–Thr-87 each bind CTP.

Belongs to the IspD/TarI cytidylyltransferase family. TarI subfamily.

It catalyses the reaction D-ribitol 5-phosphate + CTP + H(+) = CDP-L-ribitol + diphosphate. Its pathway is cell wall biogenesis; poly(ribitol phosphate) teichoic acid biosynthesis. Functionally, catalyzes the transfer of the cytidylyl group of CTP to D-ribitol 5-phosphate. In Staphylococcus epidermidis (strain ATCC 35984 / DSM 28319 / BCRC 17069 / CCUG 31568 / BM 3577 / RP62A), this protein is Ribitol-5-phosphate cytidylyltransferase.